Reading from the N-terminus, the 384-residue chain is Glucans biosynthesis protein C (384 aa).

Helical transmembrane passes span 17 to 37, 54 to 74, 91 to 111, 140 to 160, 173 to 193, 212 to 232, 240 to 260, 274 to 294, 311 to 331, and 338 to 358; these read AWLMLLGIPFHISLIYSTHSW, FIHAFRMQVFFVISGYFSYML, VGIPMLTAIPLLTLPQFILLQ, LWFLLVLVILTTVSIGIFTWF, AISLAKLSLIFFLLGVAYAAI, FIVMQTLFYVPFFILGALAFI, FTTPSRGCTLGAAVAFIAYLL, TESVITMVMGLWMVNVVFSLG, ASLFIYLVHHPLTLFFGAYIT, and LIGFLCGLIFVMGIALILYEI.

The protein belongs to the acyltransferase 3 family. OpgC subfamily.

The protein resides in the cell membrane. Its pathway is glycan metabolism; osmoregulated periplasmic glucan (OPG) biosynthesis. Necessary for the succinyl substitution of periplasmic glucans. Could catalyze the transfer of succinyl residues from the cytoplasmic side of the membrane to the nascent glucan backbones on the periplasmic side of the membrane. The protein is Glucans biosynthesis protein C of Salmonella heidelberg (strain SL476).